Reading from the N-terminus, the 505-residue chain is Aspartyl/glutamyl-tRNA(Asn/Gln) amidotransferase subunit B (505 aa).

The protein belongs to the GatB/GatE family. GatB subfamily. In terms of assembly, heterotrimer of A, B and C subunits.

The enzyme catalyses L-glutamyl-tRNA(Gln) + L-glutamine + ATP + H2O = L-glutaminyl-tRNA(Gln) + L-glutamate + ADP + phosphate + H(+). It catalyses the reaction L-aspartyl-tRNA(Asn) + L-glutamine + ATP + H2O = L-asparaginyl-tRNA(Asn) + L-glutamate + ADP + phosphate + 2 H(+). In terms of biological role, allows the formation of correctly charged Asn-tRNA(Asn) or Gln-tRNA(Gln) through the transamidation of misacylated Asp-tRNA(Asn) or Glu-tRNA(Gln) in organisms which lack either or both of asparaginyl-tRNA or glutaminyl-tRNA synthetases. The reaction takes place in the presence of glutamine and ATP through an activated phospho-Asp-tRNA(Asn) or phospho-Glu-tRNA(Gln). The chain is Aspartyl/glutamyl-tRNA(Asn/Gln) amidotransferase subunit B from Dinoroseobacter shibae (strain DSM 16493 / NCIMB 14021 / DFL 12).